We begin with the raw amino-acid sequence, 570 residues long: Pyruvate decarboxylase (570 aa).

The propeptide at 1 to 2 is removed in mature form; the sequence is MV. Substrate contacts are provided by D33 and H120. The interval 394–476 is thiamine pyrophosphate binding; it reads DSWFNGIQLK…MLINNRGYTI (83 aa). Mg(2+)-binding residues include D444, N471, and G473. Substrate is bound at residue E477.

It belongs to the TPP enzyme family. As to quaternary structure, homomer. A metal cation serves as cofactor. The cofactor is thiamine diphosphate.

The protein resides in the cytoplasm. It catalyses the reaction a 2-oxocarboxylate + H(+) = an aldehyde + CO2. The protein operates within carbohydrate metabolism; pyruvate metabolism. In Neurospora crassa (strain ATCC 24698 / 74-OR23-1A / CBS 708.71 / DSM 1257 / FGSC 987), this protein is Pyruvate decarboxylase (cfp).